Reading from the N-terminus, the 153-residue chain is SsrA-binding protein (153 aa).

Over residues 133 to 143 (ADLKERDDKRQ) the composition is skewed to basic and acidic residues. The tract at residues 133 to 153 (ADLKERDDKRQMQQALKQQQY) is disordered. Over residues 144–153 (MQQALKQQQY) the composition is skewed to low complexity.

It belongs to the SmpB family.

The protein localises to the cytoplasm. In terms of biological role, required for rescue of stalled ribosomes mediated by trans-translation. Binds to transfer-messenger RNA (tmRNA), required for stable association of tmRNA with ribosomes. tmRNA and SmpB together mimic tRNA shape, replacing the anticodon stem-loop with SmpB. tmRNA is encoded by the ssrA gene; the 2 termini fold to resemble tRNA(Ala) and it encodes a 'tag peptide', a short internal open reading frame. During trans-translation Ala-aminoacylated tmRNA acts like a tRNA, entering the A-site of stalled ribosomes, displacing the stalled mRNA. The ribosome then switches to translate the ORF on the tmRNA; the nascent peptide is terminated with the 'tag peptide' encoded by the tmRNA and targeted for degradation. The ribosome is freed to recommence translation, which seems to be the essential function of trans-translation. The sequence is that of SsrA-binding protein from Protochlamydia amoebophila (strain UWE25).